A 761-amino-acid polypeptide reads, in one-letter code: Elongation factor G, mitochondrial (761 aa).

The N-terminal 42 residues, 1 to 42, are a transit peptide targeting the mitochondrion; it reads MSVQKMMWVPRKMVGGRIPFFTCSKVFSGFSRRSFHESPLAR. A tr-type G domain is found at 68–349; that stretch reads NKLRNIGISA…AIVDYLPNPS (282 aa). GTP contacts are provided by residues 77 to 84, 148 to 152, and 202 to 205; these read AHIDSGKT, DTPGH, and NKMD.

Belongs to the TRAFAC class translation factor GTPase superfamily. Classic translation factor GTPase family. EF-G/EF-2 subfamily. Post-translationally, the precursor is processed in two steps involving mitochondrial intermediate peptidase (MIP) and mitochondrial processing peptidase (MPP).

The protein resides in the mitochondrion. Its pathway is protein biosynthesis; polypeptide chain elongation. Mitochondrial GTPase that catalyzes the GTP-dependent ribosomal translocation step during translation elongation. During this step, the ribosome changes from the pre-translocational (PRE) to the post-translocational (POST) state as the newly formed A-site-bound peptidyl-tRNA and P-site-bound deacylated tRNA move to the P and E sites, respectively. Catalyzes the coordinated movement of the two tRNA molecules, the mRNA and conformational changes in the ribosome. The chain is Elongation factor G, mitochondrial from Saccharomyces cerevisiae (strain ATCC 204508 / S288c) (Baker's yeast).